Consider the following 212-residue polypeptide: Dephospho-CoA kinase (212 aa).

A DPCK domain is found at 8–212; it reads LVGVTGGLGS…QLLQQAMLRR (205 aa). 16–21 contacts ATP; it reads GSGKSM.

This sequence belongs to the CoaE family.

The protein localises to the cytoplasm. The enzyme catalyses 3'-dephospho-CoA + ATP = ADP + CoA + H(+). It participates in cofactor biosynthesis; coenzyme A biosynthesis; CoA from (R)-pantothenate: step 5/5. Catalyzes the phosphorylation of the 3'-hydroxyl group of dephosphocoenzyme A to form coenzyme A. The protein is Dephospho-CoA kinase of Chlorobium chlorochromatii (strain CaD3).